The sequence spans 361 residues: Queuine tRNA-ribosyltransferase (361 aa).

The active-site Proton acceptor is the Asp-92. Substrate is bound by residues 92-96, Asp-146, Gln-189, and Gly-216; that span reads DSGGF. Residues 247-253 are RNA binding; the sequence is GVGKPAD. Asp-266 functions as the Nucleophile in the catalytic mechanism. Residues 271 to 275 are RNA binding; important for wobble base 34 recognition; that stretch reads TRAGR. 4 residues coordinate Zn(2+): Cys-304, Cys-306, Cys-309, and His-335.

It belongs to the queuine tRNA-ribosyltransferase family. In terms of assembly, homodimer. Within each dimer, one monomer is responsible for RNA recognition and catalysis, while the other monomer binds to the replacement base PreQ1. The cofactor is Zn(2+).

The catalysed reaction is 7-aminomethyl-7-carbaguanine + guanosine(34) in tRNA = 7-aminomethyl-7-carbaguanosine(34) in tRNA + guanine. It participates in tRNA modification; tRNA-queuosine biosynthesis. In terms of biological role, catalyzes the base-exchange of a guanine (G) residue with the queuine precursor 7-aminomethyl-7-deazaguanine (PreQ1) at position 34 (anticodon wobble position) in tRNAs with GU(N) anticodons (tRNA-Asp, -Asn, -His and -Tyr). Catalysis occurs through a double-displacement mechanism. The nucleophile active site attacks the C1' of nucleotide 34 to detach the guanine base from the RNA, forming a covalent enzyme-RNA intermediate. The proton acceptor active site deprotonates the incoming PreQ1, allowing a nucleophilic attack on the C1' of the ribose to form the product. After dissociation, two additional enzymatic reactions on the tRNA convert PreQ1 to queuine (Q), resulting in the hypermodified nucleoside queuosine (7-(((4,5-cis-dihydroxy-2-cyclopenten-1-yl)amino)methyl)-7-deazaguanosine). This is Queuine tRNA-ribosyltransferase from Rickettsia massiliae (strain Mtu5).